The following is a 422-amino-acid chain: 3-isopropylmalate dehydratase large subunit (422 aa).

The [4Fe-4S] cluster site is built by C294, C354, and C357.

It belongs to the aconitase/IPM isomerase family. LeuC type 2 subfamily. In terms of assembly, heterodimer of LeuC and LeuD. The cofactor is [4Fe-4S] cluster.

The catalysed reaction is (2R,3S)-3-isopropylmalate = (2S)-2-isopropylmalate. It participates in amino-acid biosynthesis; L-leucine biosynthesis; L-leucine from 3-methyl-2-oxobutanoate: step 2/4. In terms of biological role, catalyzes the isomerization between 2-isopropylmalate and 3-isopropylmalate, via the formation of 2-isopropylmaleate. This chain is 3-isopropylmalate dehydratase large subunit, found in Mycolicibacterium smegmatis (strain ATCC 700084 / mc(2)155) (Mycobacterium smegmatis).